A 514-amino-acid chain; its full sequence is Lysine--tRNA ligase (514 aa).

Low complexity predominate over residues 1-13 (MSKPNNQNQQNNQ). A disordered region spans residues 1–21 (MSKPNNQNQQNNQEPAPEDAN). Glutamate 422 and glutamate 429 together coordinate Mg(2+).

Belongs to the class-II aminoacyl-tRNA synthetase family. Homodimer. Requires Mg(2+) as cofactor.

Its subcellular location is the cytoplasm. The enzyme catalyses tRNA(Lys) + L-lysine + ATP = L-lysyl-tRNA(Lys) + AMP + diphosphate. In Psychrobacter cryohalolentis (strain ATCC BAA-1226 / DSM 17306 / VKM B-2378 / K5), this protein is Lysine--tRNA ligase.